A 514-amino-acid polypeptide reads, in one-letter code: Maturase K (514 aa).

It belongs to the intron maturase 2 family. MatK subfamily.

The protein resides in the plastid. Its subcellular location is the chloroplast. Its function is as follows. Usually encoded in the trnK tRNA gene intron. Probably assists in splicing its own and other chloroplast group II introns. The polypeptide is Maturase K (Plantago argentea (Silver plantain)).